We begin with the raw amino-acid sequence, 425 residues long: Trigger factor (425 aa).

Residues G163 to P248 form the PPIase FKBP-type domain.

It belongs to the FKBP-type PPIase family. Tig subfamily.

The protein resides in the cytoplasm. It catalyses the reaction [protein]-peptidylproline (omega=180) = [protein]-peptidylproline (omega=0). In terms of biological role, involved in protein export. Acts as a chaperone by maintaining the newly synthesized protein in an open conformation. Functions as a peptidyl-prolyl cis-trans isomerase. The protein is Trigger factor of Bacillus mycoides (strain KBAB4) (Bacillus weihenstephanensis).